We begin with the raw amino-acid sequence, 30 residues long: Cyclotide hyen-K (30 aa).

The segment at residues 1–30 is a cross-link (cyclopeptide (Gly-Asn)); the sequence is GIPCGESCIFIPCITTVVGCSCSNKVCYDN. Disulfide bonds link C4/C20, C8/C22, and C13/C27.

Post-translationally, this is a cyclic peptide. In terms of tissue distribution, detected in seeds (at protein level).

In terms of biological role, probably participates in a plant defense mechanism. The sequence is that of Cyclotide hyen-K from Pigea enneasperma (Spade flower).